Consider the following 496-residue polypeptide: Glutamyl-tRNA(Gln) amidotransferase subunit A (496 aa).

Active-site charge relay system residues include Lys75 and Ser150. Ser174 (acyl-ester intermediate) is an active-site residue.

This sequence belongs to the amidase family. GatA subfamily. In terms of assembly, heterotrimer of A, B and C subunits.

The catalysed reaction is L-glutamyl-tRNA(Gln) + L-glutamine + ATP + H2O = L-glutaminyl-tRNA(Gln) + L-glutamate + ADP + phosphate + H(+). Functionally, allows the formation of correctly charged Gln-tRNA(Gln) through the transamidation of misacylated Glu-tRNA(Gln) in organisms which lack glutaminyl-tRNA synthetase. The reaction takes place in the presence of glutamine and ATP through an activated gamma-phospho-Glu-tRNA(Gln). This Burkholderia ambifaria (strain ATCC BAA-244 / DSM 16087 / CCUG 44356 / LMG 19182 / AMMD) (Burkholderia cepacia (strain AMMD)) protein is Glutamyl-tRNA(Gln) amidotransferase subunit A.